The following is a 545-amino-acid chain: Periplasmic trehalase (545 aa).

The N-terminal stretch at 1-30 (MPDRTALPRAMLAAWVLLLLAACSQGPAPT) is a signal peptide. Residues Arg-160, 167 to 168 (WD), Asn-204, 213 to 215 (RSQ), 285 to 287 (RQE), and Gly-318 contribute to the substrate site. Residues Asp-320 and Glu-503 each act as proton donor/acceptor in the active site. Glu-518 provides a ligand contact to substrate.

It belongs to the glycosyl hydrolase 37 family.

Its subcellular location is the periplasm. It catalyses the reaction alpha,alpha-trehalose + H2O = alpha-D-glucose + beta-D-glucose. In terms of biological role, provides the cells with the ability to utilize trehalose at high osmolarity by splitting it into glucose molecules that can subsequently be taken up by the phosphotransferase-mediated uptake system. This Pseudomonas aeruginosa (strain ATCC 15692 / DSM 22644 / CIP 104116 / JCM 14847 / LMG 12228 / 1C / PRS 101 / PAO1) protein is Periplasmic trehalase.